Consider the following 410-residue polypeptide: Diguanylate cyclase DgcM (410 aa).

PAS domains lie at 3–70 and 129–198; these read THNF…NQHD and GFYA…HLPG. The PAC domain occupies 199–251; that stretch reads GHKPLNFIHKLADGSTRHVQTYAGPIEIYGDKLMLCIVHDITEQKRLEEQLEH. In terms of domain architecture, GGDEF spans 283-410; sequence QDYSLLLIDT…NDGRNRVLAA (128 aa). Mg(2+) is bound at residue Asp291. The substrate site is built by Asn299, His304, and Asp308. Glu334 contributes to the Mg(2+) binding site. Glu334 (proton acceptor) is an active-site residue.

Mg(2+) serves as cofactor.

It catalyses the reaction 2 GTP = 3',3'-c-di-GMP + 2 diphosphate. It functions in the pathway purine metabolism; 3',5'-cyclic di-GMP biosynthesis. Functionally, part of a signaling cascade that regulates curli biosynthesis. The cascade is composed of two cyclic-di-GMP (c-di-GMP) control modules, in which c-di-GMP controlled by the DgcE/PdeH pair (module I) regulates the activity of the DgcM/PdeR pair (module II), which in turn regulates activity of the transcription factor MlrA and expression of the master biofilm regulator csgD. In Escherichia coli O157:H7, this protein is Diguanylate cyclase DgcM.